Consider the following 197-residue polypeptide: Probable GTP-binding protein EngB (197 aa).

Residues 22 to 195 (GYPEIALVGR…WNWIEAQAFG (174 aa)) enclose the EngB-type G domain. GTP is bound by residues 30–37 (GRSNVGKS), 57–61 (GKTQT), 75–78 (DVPG), 142–145 (TKSD), and 174–176 (FSA). The Mg(2+) site is built by Ser37 and Thr59.

It belongs to the TRAFAC class TrmE-Era-EngA-EngB-Septin-like GTPase superfamily. EngB GTPase family. Mg(2+) serves as cofactor.

Its function is as follows. Necessary for normal cell division and for the maintenance of normal septation. The chain is Probable GTP-binding protein EngB from Levilactobacillus brevis (strain ATCC 367 / BCRC 12310 / CIP 105137 / JCM 1170 / LMG 11437 / NCIMB 947 / NCTC 947) (Lactobacillus brevis).